Consider the following 302-residue polypeptide: Urease accessory protein UreD (302 aa).

Belongs to the UreD family. In terms of assembly, ureD, UreF and UreG form a complex that acts as a GTP-hydrolysis-dependent molecular chaperone, activating the urease apoprotein by helping to assemble the nickel containing metallocenter of UreC. The UreE protein probably delivers the nickel.

It localises to the cytoplasm. In terms of biological role, required for maturation of urease via the functional incorporation of the urease nickel metallocenter. This chain is Urease accessory protein UreD, found in Pseudoalteromonas translucida (strain TAC 125).